The sequence spans 497 residues: Inactive metallocarboxypeptidase ecm14 (497 aa).

The signal sequence occupies residues 1–28; it reads MAYNKSLKSLVFILLASQIVFVLFLCYG. A propeptide spanning residues 29 to 148 is cleaved from the precursor; it reads KSSRELGVKW…TLFESIVPDT (120 aa). Positions 182-492 constitute a Peptidase M14 domain; it reads SYQNLESINS…AMILYYGEFI (311 aa). 2 residues coordinate Zn(2+): histidine 248 and glutamate 251. Substrate contacts are provided by residues 248 to 251 and 323 to 324; these read HARE and DA. A disulfide bridge links cysteine 317 with cysteine 337. Residue histidine 377 participates in Zn(2+) binding. Residue 378-379 coordinates substrate; the sequence is SY.

It belongs to the peptidase M14 family. It depends on Zn(2+) as a cofactor.

It localises to the endoplasmic reticulum. The protein resides in the secreted. In terms of biological role, inactive carboxypeptidase that may play a role in cell wall organization and biogenesis. The protein is Inactive metallocarboxypeptidase ecm14 of Schizosaccharomyces pombe (strain 972 / ATCC 24843) (Fission yeast).